A 317-amino-acid polypeptide reads, in one-letter code: Malate dehydrogenase (317 aa).

Residues 10-15 (GGGQIG) and D34 contribute to the NAD(+) site. Substrate is bound by residues R83 and R89. Residues N96 and 119-121 (ISN) each bind NAD(+). 2 residues coordinate substrate: N121 and R152. H176 serves as the catalytic Proton acceptor.

This sequence belongs to the LDH/MDH superfamily. MDH type 3 family.

It carries out the reaction (S)-malate + NAD(+) = oxaloacetate + NADH + H(+). Functionally, catalyzes the reversible oxidation of malate to oxaloacetate. This chain is Malate dehydrogenase, found in Geobacter sulfurreducens (strain ATCC 51573 / DSM 12127 / PCA).